Here is a 196-residue protein sequence, read N- to C-terminus: Zinc finger C2H2 protein ECU03_0940 (196 aa).

C2H2-type zinc fingers lie at residues 130–155 (YACE…KEGH) and 166–191 (YVCP…KHYH).

This Encephalitozoon cuniculi (strain GB-M1) (Microsporidian parasite) protein is Zinc finger C2H2 protein ECU03_0940.